Reading from the N-terminus, the 241-residue chain is Uracil-DNA glycosylase (241 aa).

Residue Asp-71 is the Proton acceptor of the active site.

It belongs to the uracil-DNA glycosylase (UDG) superfamily. UNG family.

It localises to the cytoplasm. The catalysed reaction is Hydrolyzes single-stranded DNA or mismatched double-stranded DNA and polynucleotides, releasing free uracil.. Functionally, excises uracil residues from the DNA which can arise as a result of misincorporation of dUMP residues by DNA polymerase or due to deamination of cytosine. This Xanthomonas campestris pv. campestris (strain 8004) protein is Uracil-DNA glycosylase.